The primary structure comprises 358 residues: Tripartite motif-containing protein 54 (358 aa).

The RING-type zinc-finger motif lies at 26-82; it reads CPICLEMFSKPVVILPCQHNLCRKCANDVFQASNPLWQSRGSTTVSSGGRFRCPSCR. A B box-type zinc finger spans residues 121–163; it reads EQHLMCEEHEEEKINIYCLSCEVPTCSLCKVFGAHKDCEVAPL. Residues Cys126, His129, Cys149, and His155 each coordinate Zn(2+). The interval 168–211 is mediates microtubule-binding and homooligomerization; that stretch reads KRQKSELSDGIAMLVAGNDRVQAVITQMEEVCQTIEDNSRRQKQ. A coiled-coil region spans residues 194-258; sequence QMEEVCQTIE…LIRQYGDHLE (65 aa). The COS domain maps to 271–329; sequence MEEPQMALYLQQAKELINKVGAMSKVELAGRPEPGYESMEQFTVSVEHVAEMLRTIDFQ. The interval 326–358 is disordered; it reads IDFQPGASGEEEEVAPDGDEGSAGQEEERPDGP. A compositionally biased stretch (acidic residues) spans 334–345; the sequence is GEEEEVAPDGDE.

Homooligomer and heterooligomer. Interacts with TRIM63 and probably with TRIM55. Interacts with tubulin.

It is found in the cytoplasm. The protein localises to the cytoskeleton. Its subcellular location is the myofibril. It localises to the sarcomere. The protein resides in the z line. May bind and stabilize microtubules during myotubes formation. This chain is Tripartite motif-containing protein 54 (TRIM54), found in Pongo abelii (Sumatran orangutan).